Here is a 90-residue protein sequence, read N- to C-terminus: Probable Fe(2+)-trafficking protein (90 aa).

It belongs to the Fe(2+)-trafficking protein family.

Its function is as follows. Could be a mediator in iron transactions between iron acquisition and iron-requiring processes, such as synthesis and/or repair of Fe-S clusters in biosynthetic enzymes. This chain is Probable Fe(2+)-trafficking protein, found in Pseudoalteromonas atlantica (strain T6c / ATCC BAA-1087).